We begin with the raw amino-acid sequence, 135 residues long: Photosystem II extrinsic protein U (135 aa).

Residues Met-1–Ala-29 form the signal peptide.

It belongs to the PsbU family. PSII is composed of 1 copy each of membrane proteins PsbA, PsbB, PsbC, PsbD, PsbE, PsbF, PsbH, PsbI, PsbJ, PsbK, PsbL, PsbM, PsbT, PsbX, PsbY, PsbZ, Psb30/Ycf12, peripheral proteins PsbO, CyanoQ (PsbQ), PsbU, PsbV and a large number of cofactors. It forms dimeric complexes.

It localises to the cellular thylakoid membrane. Its function is as follows. One of the extrinsic, lumenal subunits of photosystem II (PSII). PSII is a light-driven water plastoquinone oxidoreductase, using light energy to abstract electrons from H(2)O, generating a proton gradient subsequently used for ATP formation. The extrinsic proteins stabilize the structure of photosystem II oxygen-evolving complex (OEC), the ion environment of oxygen evolution and protect the OEC against heat-induced inactivation. The chain is Photosystem II extrinsic protein U from Synechococcus sp. (strain CC9605).